Here is a 94-residue protein sequence, read N- to C-terminus: DNA-directed RNA polymerase subunit omega (94 aa).

It belongs to the RNA polymerase subunit omega family. As to quaternary structure, consists of a sigma factor and the RNAP core enzyme which is composed of 2 alpha chains, 1 beta chain, 1 beta' chain and 1 subunit omega.

It catalyses the reaction RNA(n) + a ribonucleoside 5'-triphosphate = RNA(n+1) + diphosphate. Its function is as follows. Promotes RNA polymerase assembly. Latches the N- and C-terminal regions of the beta' subunit thereby facilitating its interaction with the beta and alpha subunits. This Shewanella violacea (strain JCM 10179 / CIP 106290 / LMG 19151 / DSS12) protein is DNA-directed RNA polymerase subunit omega.